Reading from the N-terminus, the 176-residue chain is NAD(P)H-quinone oxidoreductase subunit J (176 aa).

The protein belongs to the complex I 30 kDa subunit family. As to quaternary structure, NDH-1 can be composed of about 15 different subunits; different subcomplexes with different compositions have been identified which probably have different functions.

The protein resides in the cell inner membrane. The enzyme catalyses a plastoquinone + NADH + (n+1) H(+)(in) = a plastoquinol + NAD(+) + n H(+)(out). The catalysed reaction is a plastoquinone + NADPH + (n+1) H(+)(in) = a plastoquinol + NADP(+) + n H(+)(out). NDH-1 shuttles electrons from an unknown electron donor, via FMN and iron-sulfur (Fe-S) centers, to quinones in the respiratory and/or the photosynthetic chain. The immediate electron acceptor for the enzyme in this species is believed to be plastoquinone. Couples the redox reaction to proton translocation, and thus conserves the redox energy in a proton gradient. Cyanobacterial NDH-1 also plays a role in inorganic carbon-concentration. The protein is NAD(P)H-quinone oxidoreductase subunit J of Gloeobacter violaceus (strain ATCC 29082 / PCC 7421).